Here is a 337-residue protein sequence, read N- to C-terminus: MSIKIAIDAMGGDHGIKVTVPASLEALSKFSDISIVLVGNQPLIEAELANHKYDKNRLSVEHAEQIVEMDDLPSKALRNKRKSSMRIALNLVKDDVAQACVSAGNTGALMAVSKFVLKTLPGIDRPAICTQMPTMKGHVHVLDLGANVGADGQSLAQFAVMGSVLAQAVDSNSRPRVGLLNIGEEEIKGHQRIKDANEILKSSDAINYVGYVEGDEIFKGDVDVVSCDGFDGNVALKASEGVAKMISFYLRAAFNKNLLTKLAGLVVYPVLKAFKAKVDPRRYNGASFLGLRKIVIKSHGGADVFSFYHAIAEARLEVNKNVPELIATEVKAILETH.

Belongs to the PlsX family. As to quaternary structure, homodimer. Probably interacts with PlsY.

Its subcellular location is the cytoplasm. It carries out the reaction a fatty acyl-[ACP] + phosphate = an acyl phosphate + holo-[ACP]. The protein operates within lipid metabolism; phospholipid metabolism. Its function is as follows. Catalyzes the reversible formation of acyl-phosphate (acyl-PO(4)) from acyl-[acyl-carrier-protein] (acyl-ACP). This enzyme utilizes acyl-ACP as fatty acyl donor, but not acyl-CoA. This is Phosphate acyltransferase from Hydrogenovibrio crunogenus (strain DSM 25203 / XCL-2) (Thiomicrospira crunogena).